The sequence spans 481 residues: Glucokinase-1 (481 aa).

A Hexokinase domain is found at P4–L477. The segment at S64–T204 is hexokinase small subdomain. K101 contacts ATP. The tract at residues K146–F172 is glucose-binding. The segment at N205 to D466 is hexokinase large subdomain. ATP is bound at residue D466 to G471.

Belongs to the hexokinase family.

The enzyme catalyses D-glucose + ATP = D-glucose 6-phosphate + ADP + H(+). It carries out the reaction a D-hexose + ATP = a D-hexose 6-phosphate + ADP + H(+). It catalyses the reaction D-mannose + ATP = D-mannose 6-phosphate + ADP + H(+). Its pathway is carbohydrate metabolism; hexose metabolism. It functions in the pathway carbohydrate degradation; glycolysis; D-glyceraldehyde 3-phosphate and glycerone phosphate from D-glucose: step 1/4. Glukokinase specific for aldohexoses. Phosphorylates glucose and mannose, but not fructose. The chain is Glucokinase-1 (GLK1) from Kluyveromyces lactis (strain ATCC 8585 / CBS 2359 / DSM 70799 / NBRC 1267 / NRRL Y-1140 / WM37) (Yeast).